The following is a 134-amino-acid chain: Small ribosomal subunit protein uS11 (134 aa).

The tract at residues 114-134 (SISDVTPQPHNGCRPPKRRRV) is disordered.

The protein belongs to the universal ribosomal protein uS11 family. As to quaternary structure, part of the 30S ribosomal subunit. Interacts with proteins S7 and S18. Binds to IF-3.

Functionally, located on the platform of the 30S subunit, it bridges several disparate RNA helices of the 16S rRNA. Forms part of the Shine-Dalgarno cleft in the 70S ribosome. The chain is Small ribosomal subunit protein uS11 from Corynebacterium efficiens (strain DSM 44549 / YS-314 / AJ 12310 / JCM 11189 / NBRC 100395).